The chain runs to 120 residues: UPF0102 protein Moth_0988 (120 aa).

The protein belongs to the UPF0102 family.

This is UPF0102 protein Moth_0988 from Moorella thermoacetica (strain ATCC 39073 / JCM 9320).